The primary structure comprises 267 residues: U6 snRNA phosphodiesterase 1 (267 aa).

Polar residues predominate over residues 1 to 13 (MSSAPLVGYSSSG). The interval 1–74 (MSSAPLVGYS…DSAKHGGRIR (74 aa)) is disordered. Histidine 122 serves as the catalytic Proton acceptor. 122–124 (HVS) lines the AMP pocket. UMP contacts are provided by residues glutamine 166, tyrosine 204, and 208–212 (SFHIS). AMP-binding positions include tyrosine 204 and 206–212 (DPSFHIS). The active-site Proton donor is histidine 210.

It belongs to the 2H phosphoesterase superfamily. USB1 family. In terms of assembly, interacts with PLRG1, CDC5L and PRPF19.

The protein resides in the nucleus. The catalysed reaction is a 3'-end uridylyl-uridine-RNA = a 3'-end 2',3'-cyclophospho-uridine-RNA + uridine. The enzyme catalyses a 3'-end uridylyl-adenosine-RNA = a 3'-end 2',3'-cyclophospho-uridine-RNA + adenosine. Functionally, 3'-5' RNA exonuclease that trims the 3' end of oligo(U) and oligo(A) tracts of the pre-U6 small nuclear RNA (snRNA) molecule, leading to the formation of a mature U6 snRNA 3' end-terminated with a 2',3'-cyclic phosphate. Participates in the U6 snRNA 3' end processing that prevents U6 snRNA degradation. In addition also removes uridines from the 3' end of U6atac snRNA and possibly the vault RNA VTRNA1-1. The chain is U6 snRNA phosphodiesterase 1 from Mus musculus (Mouse).